An 839-amino-acid polypeptide reads, in one-letter code: V-type proton ATPase 116 kDa subunit a 1 (839 aa).

The Cytoplasmic segment spans residues 1-395 (MGELFRSEEM…DAYGIGTYRE (395 aa)). Phosphothreonine is present on residues threonine 257 and threonine 367. Tyrosine 371 carries the post-translational modification Phosphotyrosine. Residues 396 to 414 (INPAPYTVITFPFLFAVMF) traverse the membrane as a helical segment. The Vacuolar portion of the chain corresponds to 415–416 (GD). The chain crosses the membrane as a helical span at residues 417–433 (FGHGILMTLFAVWMVLR). The Cytoplasmic segment spans residues 434–448 (ESRILSQKHENEMFS). Residues 449-478 (MVFSGRYIILLMGLFSIYTGLIYNDCFSKS) form a helical membrane-spanning segment. Residues 479-542 (LNIFGSSWSV…ATNKLTFLNS (64 aa)) are Vacuolar-facing. A helical transmembrane segment spans residues 543-562 (FKMKMSVILGIIHMLFGVSL). Topologically, residues 563–580 (SLFNHIYFKKPLNIYFGF) are cytoplasmic. Residues 581–601 (IPEIIFMSSLFGYLVILIFYK) form a helical membrane-spanning segment. Topologically, residues 602–646 (WTAYDAHSSRNAPSLLIHFINMFLFSYPESGNAMLYSGQKGIQCF) are vacuolar. Residues 647 to 666 (LIVVAMLCVPWMLLFKPLIL) traverse the membrane as a helical segment. Topologically, residues 667–726 (RHQYLRKKHLGTLNFGGIRVGNGPTEEDAEIIQHDQLSTHSEDAEEFDFGDTMVHQAIHT) are cytoplasmic. The chain crosses the membrane as a helical span at residues 727 to 751 (IEYCLGCISNTASYLRLWALSLAHA). The Vacuolar portion of the chain corresponds to 752–772 (QLSEVLWTMVIHIGLHVRSLA). A helical transmembrane segment spans residues 773–811 (GGLGLFFIFAAFATLTVAILLIMEGLSAFLHALRLHWVE). Residues 812 to 839 (FQNKFYTGTGFKFLPFSFEHIREGKFDE) lie on the Cytoplasmic side of the membrane.

The protein belongs to the V-ATPase 116 kDa subunit family. V-ATPase is a heteromultimeric enzyme made up of two complexes: the ATP-hydrolytic V1 complex and the proton translocation V0 complex. The V1 complex consists of three catalytic AB heterodimers that form a heterohexamer, three peripheral stalks each consisting of EG heterodimers, one central rotor including subunits D and F, and the regulatory subunits C and H. The proton translocation complex V0 consists of the proton transport subunit a, a ring of proteolipid subunits c9c'', rotary subunit d, subunits e and f, and the accessory subunits ATP6AP1/Ac45 and ATP6AP2/PRR. Interacts with SPAAR. Predominantly expressed in neurons in the cortex and in the dentate gyrus, CA1 and CA3 regions of the hippocampus (at protein level). Expressed at lower levels in astrocytes, oligodendrocytes and microglia (at protein level). In the cerebellum, present in Purkinje and granule cells (at protein level).

Its subcellular location is the cytoplasmic vesicle. The protein localises to the clathrin-coated vesicle membrane. It localises to the secretory vesicle. The protein resides in the synaptic vesicle membrane. It is found in the melanosome. In terms of biological role, subunit of the V0 complex of vacuolar(H+)-ATPase (V-ATPase), a multisubunit enzyme composed of a peripheral complex (V1) that hydrolyzes ATP and a membrane integral complex (V0) that translocates protons. V-ATPase is responsible for the acidification of various organelles, such as lysosomes, endosomes, the trans-Golgi network, and secretory granules, including synaptic vesicles. In certain cell types, can be exported to the plasma membrane, where it is involved in the acidification of the extracellular environment. Required for assembly and activity of the vacuolar ATPase. Through its action on compartment acidification, plays an essential role in neuronal development in terms of integrity and connectivity of neurons. The polypeptide is V-type proton ATPase 116 kDa subunit a 1 (Atp6v0a1) (Mus musculus (Mouse)).